The sequence spans 338 residues: GTPase Obg (338 aa).

The region spanning 1–159 (MQFIDEVKIH…RWLRLELKLL (159 aa)) is the Obg domain. Positions 160–331 (ADVGLLGFPN…LLDEIARSLW (172 aa)) constitute an OBG-type G domain. Residues 166 to 173 (GFPNVGKS), 191 to 195 (FTTLK), 213 to 216 (DIPG), 283 to 286 (NKMD), and 312 to 314 (SAA) each bind GTP. 2 residues coordinate Mg(2+): S173 and T193.

Belongs to the TRAFAC class OBG-HflX-like GTPase superfamily. OBG GTPase family. Monomer. Mg(2+) serves as cofactor.

It is found in the cytoplasm. Its function is as follows. An essential GTPase which binds GTP, GDP and possibly (p)ppGpp with moderate affinity, with high nucleotide exchange rates and a fairly low GTP hydrolysis rate. Plays a role in control of the cell cycle, stress response, ribosome biogenesis and in those bacteria that undergo differentiation, in morphogenesis control. The chain is GTPase Obg from Geobacter sulfurreducens (strain ATCC 51573 / DSM 12127 / PCA).